We begin with the raw amino-acid sequence, 1242 residues long: MMVENWPAKPEGSQWTDDQWKAVVAHGRDILVAAAAGSGKTAVLVERIIKKIINEENPVDVDRLLVVTFTNAAAQEMKNRIGEALEKVLIEEPSSRHIRKQLSLLNKASISTIHSFCLQVIRSYYYMLDIDPRFRIANQTENELLKEEVLDDILEEEYGMEENQLFFELVDRYTSDRNDDDLQRMILALHTAAGAHPNPEKWLDRLVEAYNVEGKTIEDLMYASYLLEDVKFQLETATEHIRKAMELAMLPDGPAPRMETLQTDLVLLETLSHAARKSWTSVYEAMQHVSWQTLKRIKKSDYNEDIVKQVDSLRNKAKDEVKKLQEELFSRKPESFLRDFQEMHPVLGKLVQLVKEFSNRFQAIKRDKGMVDFTDLEHFCLQILSEQGEDGELRPSPVALQYRNRFAEVLVDEYQDTNFVQESIIKLVTKDSEQEGNLFMVGDVKQSIYRFRLAEPGLFLGKYKRFTQEGLEGGMKIDLAKNFRSRHEVLAGTNFIFKQIMGEEVGEIEYDADAELKLGASYPEGEDVAAELLCIHQSEEEVLDGEEGEEVEKAQLEARLIAQRIKAMVDSGYTVYDRKTNEMRQVQYRDFVILLRSMPWAPQIMEELKLQGIPVYAELATGYFEATEVNIMMNVFRVIDNPVQDIPLAAVLRSPIVGLNDEELAMLRAHAKKGSFYEVMRSFLRGAPLEGGKELHEKLKWFYHLLQGWREFARQQSLSDLIWKVYRETGYYDFVGGLPGGKQRQANLRVLYDRARQYEATSFRGLFRFLRFIERILERGDDMGTARALGEQEDVVRIMTIHKSKGLEFPVVFVAGLGRRFNTQDLMQRFLLHKDFGFGSQFIDPRKRIKYTTLSQLAIKRKMKRELIAEEMRVLYVALTRAKEKLILIGTVKDKEKEMEKWLDTREHTEWLLPDYVRASASCYLDWIAPSLYRHRDSEILLELGQGTIPNEIYEYDTSWKVEFVDGKTLLAPEPAQEEKQELLEALREKKAVPLESERKDEVYNRLTWKYEYEDATLQRAKQSVTEIKRNYQSEDGSDTAFIQKLRAPIRTRPRFMEKKGLTYAERGTAVHAVMQHVDLKQSITIESIQEQIAKMVNKEILTFEQAEEISVERIVAFFESHLGKRVLEAKSVEREVPFTMMLSAKEAYQNWQGKSEETILVQGVIDCMIEEDDGITLIDFKTDTIEGKFPGGFDQAKPILEERYKVQLSLYAKALEKTLQHPVKEKCLYFFDGNHVITIEE.

Residues 13–486 (SQWTDDQWKA…IDLAKNFRSR (474 aa)) enclose the UvrD-like helicase ATP-binding domain. Residue 34-41 (AAAGSGKT) coordinates ATP. A UvrD-like helicase C-terminal domain is found at 506–806 (GEIEYDADAE…RIMTIHKSKG (301 aa)).

The protein belongs to the helicase family. AddA subfamily. As to quaternary structure, heterodimer of AddA and AddB/RexB. The cofactor is Mg(2+).

The enzyme catalyses Couples ATP hydrolysis with the unwinding of duplex DNA by translocating in the 3'-5' direction.. It catalyses the reaction ATP + H2O = ADP + phosphate + H(+). In terms of biological role, the heterodimer acts as both an ATP-dependent DNA helicase and an ATP-dependent, dual-direction single-stranded exonuclease. Recognizes the chi site generating a DNA molecule suitable for the initiation of homologous recombination. The AddA nuclease domain is required for chi fragment generation; this subunit has the helicase and 3' -&gt; 5' nuclease activities. The polypeptide is ATP-dependent helicase/nuclease subunit A (Bacillus cytotoxicus (strain DSM 22905 / CIP 110041 / 391-98 / NVH 391-98)).